A 160-amino-acid chain; its full sequence is Putative NrdI-like protein (160 aa).

Belongs to the NrdI family.

The polypeptide is Putative NrdI-like protein (Streptococcus pyogenes serotype M1).